We begin with the raw amino-acid sequence, 338 residues long: D-erythrose-4-phosphate dehydrogenase (338 aa).

12-13 (RI) is a binding site for NAD(+). Substrate contacts are provided by residues 154–156 (SCT), R200, 213–214 (TK), and R236. The active-site Nucleophile is the C155. Residue N318 participates in NAD(+) binding.

It belongs to the glyceraldehyde-3-phosphate dehydrogenase family. Epd subfamily. Homotetramer.

The protein localises to the cytoplasm. It catalyses the reaction D-erythrose 4-phosphate + NAD(+) + H2O = 4-phospho-D-erythronate + NADH + 2 H(+). The protein operates within cofactor biosynthesis; pyridoxine 5'-phosphate biosynthesis; pyridoxine 5'-phosphate from D-erythrose 4-phosphate: step 1/5. Catalyzes the NAD-dependent conversion of D-erythrose 4-phosphate to 4-phosphoerythronate. This Yersinia enterocolitica serotype O:8 / biotype 1B (strain NCTC 13174 / 8081) protein is D-erythrose-4-phosphate dehydrogenase.